Consider the following 150-residue polypeptide: Helix-loop-helix protein hlh-12 (150 aa).

The disordered stretch occupies residues Met1–Gln24. Basic and acidic residues predominate over residues Asn11–Gln24. Positions Asp13 to Val26 are basic motif. In terms of domain architecture, bHLH spans Asp13–Leu65. The interval Ser27 to Leu65 is helix-loop-helix motif.

In terms of assembly, forms a heterodimer with helix-loop-helix protein hlh-2.

Its subcellular location is the nucleus. Its function is as follows. Transcription factor which binds the E box motif 5'-GCAGGTG-3'. Involved in migration of the gonadal leader cells; distal tip cells (DTCs) in hermaphrodites, and linker cells in males. Positively regulates expression of alpha integrin ina-1 and ADAMTS protease gon-1. The protein is Helix-loop-helix protein hlh-12 of Caenorhabditis elegans.